The primary structure comprises 185 residues: MINDIINDSKSRMEKSLGSLKTELAKLRTCRAHPSLLEHIKVDYYNVETPLSQVASIAIENPRTLSITPWEKNMVGPIEKAIQKADLGLNPATVGMVIRVPLPPLTEERRKELARVVREEAEHARVAIRNIRREANNDLKELMKEKEISEDEERRAQTAIQKLTDAQIAEVDKMASQKEADLMAV.

Belongs to the RRF family.

It localises to the cytoplasm. In terms of biological role, responsible for the release of ribosomes from messenger RNA at the termination of protein biosynthesis. May increase the efficiency of translation by recycling ribosomes from one round of translation to another. The protein is Ribosome-recycling factor of Coxiella burnetii (strain RSA 493 / Nine Mile phase I).